The chain runs to 512 residues: Protein OS-9 homolog (512 aa).

The signal sequence occupies residues 1 to 17; it reads MRRFNLILLASLQLVGA. The segment at 71-91 is disordered; the sequence is QAREADARDNEAENKDQDGPS. Residues 73–88 show a composition bias toward basic and acidic residues; sequence READARDNEAENKDQD. A glycan (N-linked (GlcNAc...) asparagine) is linked at Asn118. One can recognise an MRH domain in the interval 149–288; it reads DSCLYFMSGW…VVNTPRLCND (140 aa). A disulfide bond links Cys151 and Cys164. Residues Trp158, Trp159, Gln171, Asp242, Arg248, Glu270, and Tyr276 each coordinate a mannooligosaccharide derivative. 2 cysteine pairs are disulfide-bonded: Cys241/Cys274 and Cys256/Cys286. Disordered regions lie at residues 329 to 349 and 485 to 512; these read QVPLKQEDTGAKSGDAAPRDV and AAAKAKGDDEEEVVEGSEEQFFDKKDEL. Residues 492-504 are compositionally biased toward acidic residues; the sequence is DDEEEVVEGSEEQ. The Prevents secretion from ER signature appears at 509–512; it reads KDEL.

This sequence belongs to the OS-9 family. In terms of assembly, interacts with missfolded ER lumenal proteins.

It localises to the endoplasmic reticulum membrane. Lectin involved in the quality control of the secretory pathway. As a member of the endoplasmic reticulum-associated degradation lumenal (ERAD-L) surveillance system, targets misfolded endoplasmic reticulum lumenal glycoproteins for degradation. This is Protein OS-9 homolog (YOS1) from Gibberella zeae (strain ATCC MYA-4620 / CBS 123657 / FGSC 9075 / NRRL 31084 / PH-1) (Wheat head blight fungus).